The chain runs to 955 residues: 4-alpha-glucanotransferase DPE2 (955 aa).

Position 1 is an N-acetylmethionine (Met-1). CBM20 domains follow at residues 13 to 122 (KSSK…LWQS) and 157 to 270 (SDQD…PWRG). The disordered stretch occupies residues 925–955 (SGRSVPANVSGEDINKSRGEVIANGSTKPNP).

Belongs to the disproportionating enzyme family.

It localises to the cytoplasm. It is found in the cytosol. It catalyses the reaction Transfers a segment of a (1-&gt;4)-alpha-D-glucan to a new position in an acceptor, which may be glucose or a (1-&gt;4)-alpha-D-glucan.. Its activity is regulated as follows. Inactivated in response to cold stress. Its function is as follows. Cytosolic alpha-glucanotransferase essential for the cytosolic metabolism of maltose, an intermediate on the pathway by which starch is converted to sucrose in leaves at night. Metabolizes maltose exported from the chloroplast and is specific for beta-maltose. May play a role in freezing tolerance. Temperature drop induces inactivation of DPE2 that leads to rapid accumulation of maltose, a solute that protects cells from freezing damage. The protein is 4-alpha-glucanotransferase DPE2 (DPE2) of Arabidopsis thaliana (Mouse-ear cress).